Reading from the N-terminus, the 323-residue chain is o-succinylbenzoate synthase (323 aa).

Lys134 serves as the catalytic Proton donor. The Mg(2+) site is built by Asp162, Glu191, and Asp214. Catalysis depends on Lys236, which acts as the Proton acceptor.

Belongs to the mandelate racemase/muconate lactonizing enzyme family. MenC type 1 subfamily. A divalent metal cation is required as a cofactor.

The catalysed reaction is (1R,6R)-6-hydroxy-2-succinyl-cyclohexa-2,4-diene-1-carboxylate = 2-succinylbenzoate + H2O. It participates in quinol/quinone metabolism; 1,4-dihydroxy-2-naphthoate biosynthesis; 1,4-dihydroxy-2-naphthoate from chorismate: step 4/7. It functions in the pathway quinol/quinone metabolism; menaquinone biosynthesis. Converts 2-succinyl-6-hydroxy-2,4-cyclohexadiene-1-carboxylate (SHCHC) to 2-succinylbenzoate (OSB). The chain is o-succinylbenzoate synthase from Proteus mirabilis (strain HI4320).